A 418-amino-acid polypeptide reads, in one-letter code: Equilibrative nucleotide transporter 4 (418 aa).

The next 11 helical transmembrane spans lie at 20–40, 54–74, 85–105, 108–128, 147–169, 186–206, 264–284, 291–311, 326–346, 353–373, and 392–412; these read MVVC…MLTI, SRVF…ILAY, ILTG…LDLT, GHGG…FGLA, LIQS…RLIT, IFLA…AYVF, HAVN…GFLY, GLGD…DLFG, KALT…YFTA, WMIM…VCIM, and LVVF…LWLI.

Belongs to the SLC29A/ENT transporter (TC 2.A.57) family. In terms of tissue distribution, expressed in leaves and at lowe levels in stems and flowers.

Its subcellular location is the cell membrane. Its function is as follows. Nucleoside transporter that can mediate uptake of adenosine, uridine, guanosine or cytidine when expressed in a heterologous system (yeast). In Arabidopsis thaliana (Mouse-ear cress), this protein is Equilibrative nucleotide transporter 4 (ENT4).